Consider the following 293-residue polypeptide: Acetylglutamate kinase (293 aa).

Substrate contacts are provided by residues 65 to 66, R87, and N188; that span reads GG.

It belongs to the acetylglutamate kinase family. ArgB subfamily.

It is found in the cytoplasm. The catalysed reaction is N-acetyl-L-glutamate + ATP = N-acetyl-L-glutamyl 5-phosphate + ADP. It participates in amino-acid biosynthesis; L-arginine biosynthesis; N(2)-acetyl-L-ornithine from L-glutamate: step 2/4. Functionally, catalyzes the ATP-dependent phosphorylation of N-acetyl-L-glutamate. The protein is Acetylglutamate kinase of Symbiobacterium thermophilum (strain DSM 24528 / JCM 14929 / IAM 14863 / T).